The primary structure comprises 237 residues: Purine nucleoside phosphorylase DeoD-type (237 aa).

Residue His-4 participates in a purine D-ribonucleoside binding. Phosphate-binding positions include Gly-20, Arg-24, Arg-43, and 87–90 (RVGT). Residues 179–181 (EME) and 203–204 (SD) each bind a purine D-ribonucleoside. The Proton donor role is filled by Asp-204.

It belongs to the PNP/UDP phosphorylase family. Homohexamer; trimer of homodimers.

The catalysed reaction is a purine D-ribonucleoside + phosphate = a purine nucleobase + alpha-D-ribose 1-phosphate. It catalyses the reaction a purine 2'-deoxy-D-ribonucleoside + phosphate = a purine nucleobase + 2-deoxy-alpha-D-ribose 1-phosphate. Catalyzes the reversible phosphorolytic breakdown of the N-glycosidic bond in the beta-(deoxy)ribonucleoside molecules, with the formation of the corresponding free purine bases and pentose-1-phosphate. This Streptococcus pyogenes serotype M4 (strain MGAS10750) protein is Purine nucleoside phosphorylase DeoD-type.